The primary structure comprises 742 residues: MTTIKTSNLGFPRLGRTREWKKAIESYWAKKISKEELDQTLTDLHKENLLLQKYYHLDSIPVGDFSLYDHILDTSLLFNIIPERFQGRTIDDDLLFDIARGNKDHVASALIKWFNTNYHYIVPEWDNVEPKVSRNVLLDRFKYAQSLNVNAHPVIVGPITFVKLSKGGHQTFEEKVKTLLPLYKEVFESLIDAGAEYIQVDEPILVTDDSESYENITREAYDYFEKAGVAKKLVIQTYFERAHLKFLSSLPVGGLGLDFVHDNGYNLKQIEAGDFDKSKTLYAGIIDGRNVWASDIEAKKVLIDKLLAHTNELVIQPSSSLLHVPVSLDDETLDTSVGEGLSFATEKLDELDALRRLLNQNDSVKYDKLKARYERFQNQSFKNLDYDFESVRTSRQSPFAQRIEQQQKRLNLPDLPTTTIGSFPQSREVRKYRADWKNKRITDEAYETFLKNEIARWIKIQEDIGLDVLVHGEFERNDMVEFFGEKLQGFLVTKFGWVQSYGSRAVKPPIIYGDVKWTAPLTVDETVYAQSLTDKPVKGMLTGPVTILNWSFERVDLPRKVVQDQIALAINEEVLALEAAGIKVIQVDEPALREGLPLRSEYHEQYLKDAVLSFKLATSSVRDETQIHTHMCYSQFGQIIHAIHDLDADVISIETSRSHGDLIKDFEDINYDLGIGLGVYDIHSPRIPTKEEITTAINRSLQQIDRSLFWVNPDCGLKTRKEEEVKDALTVLVNAVKAKRQE.

5-methyltetrahydropteroyltri-L-glutamate is bound by residues 18–21 (REWK) and Lys-112. Residues 420–422 (IGS) and Glu-473 each bind L-homocysteine. L-methionine contacts are provided by residues 420-422 (IGS) and Glu-473. Residue Trp-550 coordinates 5-methyltetrahydropteroyltri-L-glutamate. Asp-588 is a binding site for L-homocysteine. Position 588 (Asp-588) interacts with L-methionine. Residue Glu-594 participates in 5-methyltetrahydropteroyltri-L-glutamate binding. Residues His-630, Cys-632, and Glu-654 each contribute to the Zn(2+) site. His-683 acts as the Proton donor in catalysis. Cys-715 contributes to the Zn(2+) binding site.

The protein belongs to the vitamin-B12 independent methionine synthase family. The cofactor is Zn(2+).

The enzyme catalyses 5-methyltetrahydropteroyltri-L-glutamate + L-homocysteine = tetrahydropteroyltri-L-glutamate + L-methionine. Its pathway is amino-acid biosynthesis; L-methionine biosynthesis via de novo pathway; L-methionine from L-homocysteine (MetE route): step 1/1. Its function is as follows. Catalyzes the transfer of a methyl group from 5-methyltetrahydrofolate to homocysteine resulting in methionine formation. This chain is 5-methyltetrahydropteroyltriglutamate--homocysteine methyltransferase, found in Staphylococcus aureus (strain JH9).